A 560-amino-acid chain; its full sequence is Membrane protein insertase YidC (560 aa).

The next 6 helical transmembrane spans lie at 5 to 25, 334 to 354, 357 to 377, 431 to 451, 476 to 496, and 522 to 542; these read IINL…WQYF, AIDF…MNFF, YVGN…LLMF, LPIL…YVTI, LFGL…WPIL, and FMPL…LIYW.

It belongs to the OXA1/ALB3/YidC family. Type 1 subfamily. As to quaternary structure, interacts with the Sec translocase complex via SecD. Specifically interacts with transmembrane segments of nascent integral membrane proteins during membrane integration.

It localises to the cell inner membrane. Its function is as follows. Required for the insertion and/or proper folding and/or complex formation of integral membrane proteins into the membrane. Involved in integration of membrane proteins that insert both dependently and independently of the Sec translocase complex, as well as at least some lipoproteins. Aids folding of multispanning membrane proteins. In Rickettsia akari (strain Hartford), this protein is Membrane protein insertase YidC.